The chain runs to 459 residues: Argininosuccinate lyase (459 aa).

This sequence belongs to the lyase 1 family. Argininosuccinate lyase subfamily.

It localises to the cytoplasm. The catalysed reaction is 2-(N(omega)-L-arginino)succinate = fumarate + L-arginine. It functions in the pathway amino-acid biosynthesis; L-arginine biosynthesis; L-arginine from L-ornithine and carbamoyl phosphate: step 3/3. The sequence is that of Argininosuccinate lyase from Ruminiclostridium cellulolyticum (strain ATCC 35319 / DSM 5812 / JCM 6584 / H10) (Clostridium cellulolyticum).